The following is a 465-amino-acid chain: Trigger factor (465 aa).

The region spanning 164–245 (GDFVSIDLSA…VQSVKERELP (82 aa)) is the PPIase FKBP-type domain. The tract at residues 430 to 465 (GNTVDTAEMFGEPAAEPEQADAAQAGDAEKAAADSE) is disordered. The segment covering 440–455 (GEPAAEPEQADAAQAG) has biased composition (low complexity). The segment covering 456–465 (DAEKAAADSE) has biased composition (basic and acidic residues).

It belongs to the FKBP-type PPIase family. Tig subfamily.

It localises to the cytoplasm. The enzyme catalyses [protein]-peptidylproline (omega=180) = [protein]-peptidylproline (omega=0). In terms of biological role, involved in protein export. Acts as a chaperone by maintaining the newly synthesized protein in an open conformation. Functions as a peptidyl-prolyl cis-trans isomerase. The protein is Trigger factor of Nocardia farcinica (strain IFM 10152).